The primary structure comprises 490 residues: ATP synthase subunit alpha 1 (490 aa).

ATP is bound at residue 171–178 (GDNGLGKS).

The protein belongs to the ATPase alpha/beta chains family. As to quaternary structure, F-type ATPases have 2 components, CF(1) - the catalytic core - and CF(0) - the membrane proton channel. CF(1) has five subunits: alpha(3), beta(3), gamma(1), delta(1), epsilon(1). CF(0) has three main subunits: a(1), b(2) and c(9-12). The alpha and beta chains form an alternating ring which encloses part of the gamma chain. CF(1) is attached to CF(0) by a central stalk formed by the gamma and epsilon chains, while a peripheral stalk is formed by the delta and b chains.

It localises to the cell inner membrane. The catalysed reaction is ATP + H2O + 4 H(+)(in) = ADP + phosphate + 5 H(+)(out). Produces ATP from ADP in the presence of a proton gradient across the membrane. The alpha chain is a regulatory subunit. In Legionella pneumophila (strain Corby), this protein is ATP synthase subunit alpha 1.